The sequence spans 166 residues: NAD(P)H-quinone oxidoreductase subunit I, chloroplastic (166 aa).

4Fe-4S ferredoxin-type domains are found at residues 55–84 (GRIH…VDWK) and 95–124 (LNYS…MTEE). 8 residues coordinate [4Fe-4S] cluster: C64, C67, C70, C74, C104, C107, C110, and C114.

The protein belongs to the complex I 23 kDa subunit family. As to quaternary structure, NDH is composed of at least 16 different subunits, 5 of which are encoded in the nucleus. It depends on [4Fe-4S] cluster as a cofactor.

The protein resides in the plastid. It is found in the chloroplast thylakoid membrane. The catalysed reaction is a plastoquinone + NADH + (n+1) H(+)(in) = a plastoquinol + NAD(+) + n H(+)(out). The enzyme catalyses a plastoquinone + NADPH + (n+1) H(+)(in) = a plastoquinol + NADP(+) + n H(+)(out). Its function is as follows. NDH shuttles electrons from NAD(P)H:plastoquinone, via FMN and iron-sulfur (Fe-S) centers, to quinones in the photosynthetic chain and possibly in a chloroplast respiratory chain. The immediate electron acceptor for the enzyme in this species is believed to be plastoquinone. Couples the redox reaction to proton translocation, and thus conserves the redox energy in a proton gradient. The polypeptide is NAD(P)H-quinone oxidoreductase subunit I, chloroplastic (Marshallia caespitosa (Barbara's buttons)).